We begin with the raw amino-acid sequence, 291 residues long: N-acetylmannosamine kinase (291 aa).

ATP-binding positions include 5-12 (AIDIGGTK) and 132-139 (GVGGGVVC). Zn(2+) contacts are provided by histidine 156, cysteine 166, cysteine 168, and cysteine 173.

It belongs to the ROK (NagC/XylR) family. NanK subfamily. Homodimer.

It catalyses the reaction an N-acyl-D-mannosamine + ATP = an N-acyl-D-mannosamine 6-phosphate + ADP + H(+). The protein operates within amino-sugar metabolism; N-acetylneuraminate degradation; D-fructose 6-phosphate from N-acetylneuraminate: step 2/5. Catalyzes the phosphorylation of N-acetylmannosamine (ManNAc) to ManNAc-6-P. This Salmonella agona (strain SL483) protein is N-acetylmannosamine kinase.